Consider the following 122-residue polypeptide: Large ribosomal subunit protein uL14 (122 aa).

It belongs to the universal ribosomal protein uL14 family. As to quaternary structure, part of the 50S ribosomal subunit. Forms a cluster with proteins L3 and L19. In the 70S ribosome, L14 and L19 interact and together make contacts with the 16S rRNA in bridges B5 and B8.

Its function is as follows. Binds to 23S rRNA. Forms part of two intersubunit bridges in the 70S ribosome. In Geobacillus thermodenitrificans (strain NG80-2), this protein is Large ribosomal subunit protein uL14.